A 406-amino-acid chain; its full sequence is MEGKMANVYDVLKERGYLKQLTHEEEIREILGKEKVTFYIGFDPTADSLHVGHFIAMMFMAHMQQHGHRPIALAGGGTGMIGDPSGRSDMRTMMTVEMIDHNVECIKKQMQKFIDFSEDKAILANNADWLRNLNYIEFLRDVGEHFSVNRMLAAECYKSRMENGLSFLEFNYMIMQAYDFYILNHKYNCTMQLGGDDQWSNMIAGVELLRRKDRKPAYAMTCTLLTNSEGKKMGKTAKGALWLDPEKTTPYEFYQYWRNIDDQDVEKCLALLTFLPMDEVRRLGALKDAEINEAKKVLAYEVTKIIHGEEEATKAKEATEALFGSGNNLDNAPKIEVTDEDFSKELLDVLVDRKIIKTKSEGRRLIEQNGMSLNDEKIKDVKFTLNDNTLGLLKLGKKKFYNIVKK.

Tyr39 lines the L-tyrosine pocket. Positions 44–53 match the 'HIGH' region motif; sequence PTADSLHVGH. Residues Tyr172 and Gln176 each contribute to the L-tyrosine site. A 'KMSKS' region motif is present at residues 232-236; the sequence is KMGKT. Lys235 lines the ATP pocket. Residues 344-404 enclose the S4 RNA-binding domain; that stretch reads KELLDVLVDR…LGKKKFYNIV (61 aa).

This sequence belongs to the class-I aminoacyl-tRNA synthetase family. TyrS type 1 subfamily. In terms of assembly, homodimer.

The protein localises to the cytoplasm. It carries out the reaction tRNA(Tyr) + L-tyrosine + ATP = L-tyrosyl-tRNA(Tyr) + AMP + diphosphate + H(+). Catalyzes the attachment of tyrosine to tRNA(Tyr) in a two-step reaction: tyrosine is first activated by ATP to form Tyr-AMP and then transferred to the acceptor end of tRNA(Tyr). This is Tyrosine--tRNA ligase from Fusobacterium nucleatum subsp. nucleatum (strain ATCC 25586 / DSM 15643 / BCRC 10681 / CIP 101130 / JCM 8532 / KCTC 2640 / LMG 13131 / VPI 4355).